Consider the following 117-residue polypeptide: Ig heavy chain V region MOPC 47A (117 aa).

One can recognise an Ig-like domain in the interval 1-113 (EVKLVESGGG…FAYWGZGTLV (113 aa)).

The sequence is that of Ig heavy chain V region MOPC 47A from Mus musculus (Mouse).